A 221-amino-acid polypeptide reads, in one-letter code: Translation initiation factor 6 (221 aa).

This sequence belongs to the eIF-6 family.

Functionally, binds to the 50S ribosomal subunit and prevents its association with the 30S ribosomal subunit to form the 70S initiation complex. In Cenarchaeum symbiosum (strain A), this protein is Translation initiation factor 6.